The following is a 47-amino-acid chain: Bacteriocin curvaticin DN317 (47 aa).

The protein belongs to the bacteriocin class IIA/YGNGV family.

The protein localises to the secreted. Has bactericidal activity against various Gram-negative Campylobacter, and the Gram-positive L.monocytogenes and B.subtilis. In vitro, inhibits C.jejuni strain ATCC 33560 (MIC=27.3 ug/ml). The chain is Bacteriocin curvaticin DN317 from Latilactobacillus curvatus (Lactobacillus curvatus).